Reading from the N-terminus, the 118-residue chain is Large ribosomal subunit protein uL22c (118 aa).

The protein belongs to the universal ribosomal protein uL22 family. In terms of assembly, part of the 50S ribosomal subunit.

It is found in the plastid. The protein localises to the chloroplast. Functionally, this protein binds specifically to 23S rRNA. Its function is as follows. The globular domain of the protein is located near the polypeptide exit tunnel on the outside of the subunit, while an extended beta-hairpin is found that lines the wall of the exit tunnel in the center of the 70S ribosome. The sequence is that of Large ribosomal subunit protein uL22c (rpl22) from Rhodomonas salina (Cryptomonas salina).